The following is a 92-amino-acid chain: MTKNYAYPLDLSWSTEEITSVLSFLNLVEKAYENRVEAALLLKSYQNYKTIVSSKLQEKQIDRNFERVSGYSTYRAVQAAKAKEKGFISLEN.

This sequence belongs to the UPF0223 family.

This chain is UPF0223 protein SMU_1141c, found in Streptococcus mutans serotype c (strain ATCC 700610 / UA159).